Reading from the N-terminus, the 1512-residue chain is DNA (cytosine-5)-methyltransferase 2 (1512 aa).

The span at 1 to 22 (METKVGKQKKRSVDSNDDVSKE) shows a compositional bias: basic and acidic residues. Disordered regions lie at residues 1–35 (METKVGKQKKRSVDSNDDVSKERRPKRAAACRNFK) and 634–678 (AIHE…GNSE). The span at 638-662 (VEEEEIEEDEEEDENEEDDIEEEAV) shows a compositional bias: acidic residues. BAH domains lie at 707–841 (ETVA…FSLP) and 909–1026 (TTLK…KQFP). One can recognise an SAM-dependent MTase C5-type domain in the interval 1071-1505 (LATLDIFAGC…RKLKEALYLK (435 aa)). The active site involves C1176.

The protein belongs to the class I-like SAM-binding methyltransferase superfamily. C5-methyltransferase family. In terms of tissue distribution, expressed at low levels in vegetative and floral organs.

Its subcellular location is the nucleus. It catalyses the reaction a 2'-deoxycytidine in DNA + S-adenosyl-L-methionine = a 5-methyl-2'-deoxycytidine in DNA + S-adenosyl-L-homocysteine + H(+). Maintains chromatin CpG methylation that plays a role in genomic imprinting, regulation of embryogenesis and seed viability. Required for proper patterns of CG DNA methylation in dividing cells. The polypeptide is DNA (cytosine-5)-methyltransferase 2 (MET2) (Arabidopsis thaliana (Mouse-ear cress)).